A 259-amino-acid polypeptide reads, in one-letter code: Probable iron export permease protein FetB (259 aa).

The Periplasmic portion of the chain corresponds to 1 to 5; it reads MNSHN. The chain crosses the membrane as a helical span at residues 6 to 26; the sequence is ITNESLALALMLVVVAILISH. Over 27–35 the chain is Cytoplasmic; the sequence is KEKLALEKD. The next 2 membrane-spanning stretches (helical) occupy residues 36–56 and 57–77; these read ILWS…VLKY and IFSV…CFNA. At 78–91 the chain is on the cytoplasmic side; sequence AWNAQKRSKYIAKA. A helical transmembrane segment spans residues 92–112; the sequence is FISSFIAITVGAGITLAVLIL. Over 113-117 the chain is Periplasmic; sequence SGSIE. Residues 118-138 form a helical membrane-spanning segment; it reads FIPMQVIPIAGMIAGNAMVAV. The Cytoplasmic segment spans residues 139 to 191; sequence GLCYNNLGQRVISEQQQIQEKLSLGATPKQASAILIRDSIRAALIPTVDSAKT. A helical membrane pass occupies residues 192–212; sequence VGLVSLPGMMSGLIFAGIDPV. Residues 213–218 are Periplasmic-facing; that stretch reads KAIKYQ. A helical membrane pass occupies residues 219–239; sequence IMVTFMLLSTASLSTIIACYL. The Cytoplasmic portion of the chain corresponds to 240 to 259; it reads TYRKFYNSRHQLVVTQLKKK.

The protein belongs to the UPF0014 family. As to quaternary structure, the complex is composed of two ATP-binding proteins (FetA) and two transmembrane proteins (FetB).

Its subcellular location is the cell inner membrane. Functionally, part of the ABC transporter complex FetAB, which is probably involved in iron export and enhances resistance to H(2)O(2)-mediated oxidative stress. Probably responsible for the translocation of the substrate across the membrane. This Escherichia coli (strain K12) protein is Probable iron export permease protein FetB (fetB).